Reading from the N-terminus, the 157-residue chain is SsrA-binding protein (157 aa).

It belongs to the SmpB family.

It is found in the cytoplasm. Required for rescue of stalled ribosomes mediated by trans-translation. Binds to transfer-messenger RNA (tmRNA), required for stable association of tmRNA with ribosomes. tmRNA and SmpB together mimic tRNA shape, replacing the anticodon stem-loop with SmpB. tmRNA is encoded by the ssrA gene; the 2 termini fold to resemble tRNA(Ala) and it encodes a 'tag peptide', a short internal open reading frame. During trans-translation Ala-aminoacylated tmRNA acts like a tRNA, entering the A-site of stalled ribosomes, displacing the stalled mRNA. The ribosome then switches to translate the ORF on the tmRNA; the nascent peptide is terminated with the 'tag peptide' encoded by the tmRNA and targeted for degradation. The ribosome is freed to recommence translation, which seems to be the essential function of trans-translation. In Christiangramia forsetii (strain DSM 17595 / CGMCC 1.15422 / KT0803) (Gramella forsetii), this protein is SsrA-binding protein.